A 621-amino-acid chain; its full sequence is Cystathionine gamma-synthase (621 aa).

N6-(pyridoxal phosphate)lysine is present on Lys429.

This sequence belongs to the trans-sulfuration enzymes family. MET7 subfamily. As to quaternary structure, both met-3 and met-7 are required to form a functional cystathionine gamma-synthase. The cofactor is pyridoxal 5'-phosphate.

The enzyme catalyses O-succinyl-L-homoserine + L-cysteine = L,L-cystathionine + succinate + H(+). The protein operates within amino-acid biosynthesis; L-methionine biosynthesis via de novo pathway; L-cystathionine from O-succinyl-L-homoserine: step 1/1. Its function is as follows. Catalyzes the formation of L-cystathionine from O-succinyl-L-homoserine (OSHS) and L-cysteine, via a gamma-replacement reaction. In the absence of thiol, catalyzes gamma-elimination to form 2-oxobutanoate, succinate and ammonia. This Neurospora crassa (strain ATCC 24698 / 74-OR23-1A / CBS 708.71 / DSM 1257 / FGSC 987) protein is Cystathionine gamma-synthase (met-7).